The sequence spans 732 residues: Glycine--tRNA ligase (732 aa).

The transit peptide at M1–L27 directs the protein to the mitochondrion. Residues I61–F117 enclose the WHEP-TRS domain. Residue E297 participates in glycine binding. Residues R329–E331 and R340–V341 each bind ATP. A glycine-binding site is contributed by E348. ATP is bound at residue E453–C454. E572–S574 serves as a coordination point for glycine. R579 is a binding site for ATP.

It belongs to the class-II aminoacyl-tRNA synthetase family. In terms of assembly, homodimer.

It is found in the mitochondrion. The protein resides in the cytoplasm. The protein localises to the cell projection. Its subcellular location is the axon. The enzyme catalyses tRNA(Gly) + glycine + ATP = glycyl-tRNA(Gly) + AMP + diphosphate. It catalyses the reaction 2 ATP + H(+) = P(1),P(4)-bis(5'-adenosyl) tetraphosphate + diphosphate. In terms of biological role, catalyzes the ATP-dependent ligation of glycine to the 3'-end of its cognate tRNA, via the formation of an aminoacyl-adenylate intermediate (Gly-AMP). Also produces diadenosine tetraphosphate (Ap4A), a universal pleiotropic signaling molecule needed for cell regulation pathways, by direct condensation of 2 ATPs. Thereby, may play a special role in Ap4A homeostasis. Required for terminal arborization of both dendrites and axons during development. The polypeptide is Glycine--tRNA ligase (Bombyx mori (Silk moth)).